The following is a 669-amino-acid chain: RNA-binding protein 14 (669 aa).

RRM domains are found at residues 1–73 (MKIF…MSRP) and 79–149 (WKIF…LSTK). Residues lysine 126, lysine 135, lysine 138, lysine 149, and lysine 153 each participate in a glycyl lysine isopeptide (Lys-Gly) (interchain with G-Cter in SUMO2) cross-link. Disordered stretches follow at residues 148–175 (TKGQ…DTAF) and 193–232 (NSTG…PLTA). The residue at position 161 (serine 161) is a Phosphoserine. Lysine 164 is subject to N6-acetyllysine; alternate. A Glycyl lysine isopeptide (Lys-Gly) (interchain with G-Cter in SUMO2); alternate cross-link involves residue lysine 164. At threonine 206 the chain carries Phosphothreonine. Serine 220, serine 242, serine 244, serine 256, serine 272, and serine 280 each carry phosphoserine. The segment at 284 to 303 (PYRGQLASPSSQSAAASSLG) is disordered. Low complexity predominate over residues 287-303 (GQLASPSSQSAAASSLG). The tract at residues 307–354 (GAQPSASALSSYGGQPAAASSLNSYGAQGSSLASYGNQPSSYGAQAAS) is TRBP-interacting domain; interaction with STIL. 4 positions are modified to phosphoserine: serine 520, serine 523, serine 527, and serine 562. The disordered stretch occupies residues 569–590 (ANSTPPPYERTRLSPPRASYDD). Position 572 is a phosphothreonine (threonine 572). Phosphoserine is present on serine 582. Lysine 600 participates in a covalent cross-link: Glycyl lysine isopeptide (Lys-Gly) (interchain with G-Cter in SUMO2). A phosphoserine mark is found at serine 618, serine 620, serine 623, serine 627, serine 643, and serine 649.

In terms of assembly, interacts with NCOA6, CITED1 and XRCC5/KU86. Interacts with SS18. Interacts with STIL and interferes with its interaction with CPAP. Interacts with gamma-tubulin. Part of the HDP-RNP complex composed of at least HEXIM1, PRKDC, XRCC5, XRCC6, paraspeckle proteins (SFPQ, NONO, PSPC1, RBM14, and MATR3) and NEAT1 RNA.

Its subcellular location is the nucleus. It is found in the nucleolus. It localises to the cytoplasm. May function as a nuclear receptor coactivator, enhancing transcription through other coactivators such as NCOA6 and CITED1. Regulates centriole biogenesis by suppressing the formation of aberrant centriolar protein complexes in the cytoplasm and thus preserving mitotic spindle integrity. Prevents the formation of the STIL-CPAP complex (which can induce the formation of aberrant centriolar protein complexes) by interfering with the interaction of STIL with CPAP. Plays a role in the regulation of DNA virus-mediated innate immune response by assembling into the HDP-RNP complex, a complex that serves as a platform for IRF3 phosphorylation and subsequent innate immune response activation through the cGAS-STING pathway. The sequence is that of RNA-binding protein 14 (RBM14) from Bos taurus (Bovine).